A 274-amino-acid polypeptide reads, in one-letter code: MRAAGVGLVDCHCHLSAPDFDRDLDDVLEKAKKANVVALVAVAEHSGEFEKIMQLSERYNGFVLPCLGVHPVQGLPPEDQRSVTLKDLDVALPIIENYKDRLLAIGEVGLDFSPRFAGTGEQKEEQRQVLIRQIQLAKRLNLPVNVHSRSAGRPTINLLQEQGAEKVLLHAFDGRPSVAMEGVRAGYFFSIPPSIIRSGQKQKLVKQLPLTSICLETDSPALGPEKQVRNEPWNISISAEYIAQVKGISVEEVIEVTTQNALKLFPKLRHLLQK.

Zn(2+) is bound by residues H12, H14, E107, H147, H170, and D218.

Belongs to the metallo-dependent hydrolases superfamily. TatD-type hydrolase family. Mn(2+) is required as a cofactor. It depends on Ca(2+) as a cofactor. Requires Mg(2+) as cofactor. The cofactor is Zn(2+).

The protein localises to the nucleus. With respect to regulation, the 3'-exonuclease activity is sensitive to the metal ion present in the active site, whereas the AP endodeoxyribonuclease activity is observed in a variety of divalent metal cofactors. 3'-exoxonuclease activity is suppressed in the presence of Ca(2+), Zn(2+) and Ni(2+). In terms of biological role, exhibits 3'-exonuclease activities and apurinic/apyrimidinic (AP) endonuclease (in vitro). Show preferential AP endonuclease activity on double-stranded DNA substrates and 3'- exonuclease activity on single-stranded DNA. The protein is Deoxyribonuclease TATDN3 (TATDN3) of Homo sapiens (Human).